The chain runs to 678 residues: NADPH--cytochrome P450 reductase (678 aa).

Position 2 is an N-acetylglycine (G2). The Lumenal segment spans residues 2 to 22 (GDSNVDTGTTTSEMVAEEVSL). A helical membrane pass occupies residues 23–43 (FSATDMVLFSLIVGLLTYWFI). At 44 to 678 (FRKKKDEVPE…KGRYSLDVWS (635 aa)) the chain is on the cytoplasmic side. A Phosphoserine modification is found at S63. Residues 80-224 (IIVFYGSQTG…DFITWREQFW (145 aa)) form the Flavodoxin-like domain. Residues 86–91 (SQTGTA), 138–141 (ATYG), 173–182 (LGNKTYEHFN), and D208 contribute to the FMN site. An FAD-binding FR-type domain is found at 279-521 (KNPFLAVVTT…FVRKSQFRLP (243 aa)). R298 lines the NADP(+) pocket. Residues R424, 454–457 (RYYS), 472–474 (CAV), Y478, and 488–491 (GVAT) contribute to the FAD site. NADP(+)-binding positions include T535, 596 to 597 (SR), 602 to 606 (KVYVQ), and D639. W677 is a binding site for FAD.

It belongs to the NADPH--cytochrome P450 reductase family. In the N-terminal section; belongs to the flavodoxin family. The protein in the C-terminal section; belongs to the flavoprotein pyridine nucleotide cytochrome reductase family. FAD is required as a cofactor. It depends on FMN as a cofactor.

It localises to the endoplasmic reticulum membrane. It carries out the reaction 2 oxidized [cytochrome P450] + NADPH = 2 reduced [cytochrome P450] + NADP(+) + H(+). In terms of biological role, this enzyme is required for electron transfer from NADP to cytochrome P450 in microsomes. It can also provide electron transfer to heme oxygenase and cytochrome B5. The chain is NADPH--cytochrome P450 reductase from Sus scrofa (Pig).